The sequence spans 467 residues: UDP-N-acetylmuramoylalanine--D-glutamate ligase (467 aa).

ATP is bound at residue 115-121 (GTDGKTT).

This sequence belongs to the MurCDEF family.

The protein resides in the cytoplasm. It carries out the reaction UDP-N-acetyl-alpha-D-muramoyl-L-alanine + D-glutamate + ATP = UDP-N-acetyl-alpha-D-muramoyl-L-alanyl-D-glutamate + ADP + phosphate + H(+). It participates in cell wall biogenesis; peptidoglycan biosynthesis. In terms of biological role, cell wall formation. Catalyzes the addition of glutamate to the nucleotide precursor UDP-N-acetylmuramoyl-L-alanine (UMA). This chain is UDP-N-acetylmuramoylalanine--D-glutamate ligase, found in Chlorobaculum parvum (strain DSM 263 / NCIMB 8327) (Chlorobium vibrioforme subsp. thiosulfatophilum).